The following is a 267-amino-acid chain: B3 domain-containing protein At3g11580 (267 aa).

The segment at residues 29-143 (FEKSLTPSDV…RLFIGWRRRG (115 aa)) is a DNA-binding region (TF-B3).

It is found in the nucleus. This is B3 domain-containing protein At3g11580 (ARF32) from Arabidopsis thaliana (Mouse-ear cress).